A 214-amino-acid chain; its full sequence is ATP phosphoribosyltransferase (214 aa).

The protein belongs to the ATP phosphoribosyltransferase family. Short subfamily. As to quaternary structure, heteromultimer composed of HisG and HisZ subunits.

The protein localises to the cytoplasm. The enzyme catalyses 1-(5-phospho-beta-D-ribosyl)-ATP + diphosphate = 5-phospho-alpha-D-ribose 1-diphosphate + ATP. It participates in amino-acid biosynthesis; L-histidine biosynthesis; L-histidine from 5-phospho-alpha-D-ribose 1-diphosphate: step 1/9. In terms of biological role, catalyzes the condensation of ATP and 5-phosphoribose 1-diphosphate to form N'-(5'-phosphoribosyl)-ATP (PR-ATP). Has a crucial role in the pathway because the rate of histidine biosynthesis seems to be controlled primarily by regulation of HisG enzymatic activity. In Ruminiclostridium cellulolyticum (strain ATCC 35319 / DSM 5812 / JCM 6584 / H10) (Clostridium cellulolyticum), this protein is ATP phosphoribosyltransferase.